The sequence spans 64 residues: Potassium channel toxin kappa-KTx 3.1 (64 aa).

A signal peptide spans methionine 1–alanine 26. Residues glutamate 27–glutamate 36 constitute a propeptide that is removed on maturation. 2 disulfides stabilise this stretch: cysteine 43–cysteine 61 and cysteine 47–cysteine 57.

It belongs to the short scorpion toxin superfamily. Potassium channel inhibitor kappa-KTx family. Kappa-KTx 3 subfamily. Expressed by the venom gland.

It is found in the secreted. Functionally, potassium channel inhibitor (Kv). The polypeptide is Potassium channel toxin kappa-KTx 3.1 (Heterometrus petersii (Asian forest scorpion)).